A 452-amino-acid polypeptide reads, in one-letter code: 3-phosphoshikimate 1-carboxyvinyltransferase (452 aa).

3 residues coordinate 3-phosphoshikimate: lysine 24, serine 25, and arginine 29. Residue lysine 24 participates in phosphoenolpyruvate binding. Positions 95 and 123 each coordinate phosphoenolpyruvate. 3-phosphoshikimate contacts are provided by serine 167, glutamine 169, aspartate 319, and lysine 346. Glutamine 169 provides a ligand contact to phosphoenolpyruvate. Catalysis depends on aspartate 319, which acts as the Proton acceptor. Phosphoenolpyruvate-binding residues include arginine 350 and arginine 394.

Belongs to the EPSP synthase family. As to quaternary structure, monomer.

The protein resides in the cytoplasm. It carries out the reaction 3-phosphoshikimate + phosphoenolpyruvate = 5-O-(1-carboxyvinyl)-3-phosphoshikimate + phosphate. Its pathway is metabolic intermediate biosynthesis; chorismate biosynthesis; chorismate from D-erythrose 4-phosphate and phosphoenolpyruvate: step 6/7. Functionally, catalyzes the transfer of the enolpyruvyl moiety of phosphoenolpyruvate (PEP) to the 5-hydroxyl of shikimate-3-phosphate (S3P) to produce enolpyruvyl shikimate-3-phosphate and inorganic phosphate. This Phenylobacterium zucineum (strain HLK1) protein is 3-phosphoshikimate 1-carboxyvinyltransferase.